The sequence spans 447 residues: MASWVLSECGLRPLPRVYPKPRTGHPLLNSNPTKLRFSRTDLGNGSSFCLSSGILREKNWALRVSAPLRVLQVEEEEENKEGERVINGGEEFDPGAPPPFKLSDIREAIPKHCWVKDPWRSMGYVVRDVAVVFGLAAVAAYFNNWVVWPLYWFAQSTMFWALFVLGHDCGHGSFSNDPKLNSVVGHILHSSILVPYHGWRISHRTHHQNHGHVENDESWHPLSEKIYKNLDTATKKLRFTLPFPLLAYPIYLWSRSPGKQGSHFHPDSDLFVPNEKKDVITSTVCWTAMLALLVGLSFVIGPVQLLKLYGIPYLGNVMWLDLVTYLHHHGHEDKLPWYRGKEWSYLRGGLTTLDRDYGWINNIHHDIGTHVIHHLFPQIPHYHLIEATEAAKPVLGKYYREPKKSAPLPFHLLGDLTRSLKRDHYVSDVGDVVYYQTDPQLTGAEKS.

Residues 167-171 (HDCGH) carry the Histidine box-1 motif. The Histidine box-2 signature appears at 203–207 (HRTHH). The Histidine box-3 signature appears at 370–374 (HVIHH).

It belongs to the fatty acid desaturase type 1 family.

The protein resides in the plastid. The protein localises to the chloroplast membrane. It participates in lipid metabolism; polyunsaturated fatty acid biosynthesis. Functionally, chloroplast omega-3 fatty acid desaturase introduces the third double bond in the biosynthesis of 16:3 and 18:3 fatty acids, important constituents of plant membranes. It is thought to use ferredoxin as an electron donor and to act on fatty acids esterified to galactolipids, sulfolipids and phosphatidylglycerol. The polypeptide is Omega-3 fatty acid desaturase, chloroplastic (FAD7) (Sesamum indicum (Oriental sesame)).